Reading from the N-terminus, the 166-residue chain is Mitochondrial inner membrane protease subunit 1 (166 aa).

Active-site residues include S40 and K83.

The protein belongs to the peptidase S26 family. IMP1 subfamily. As to quaternary structure, heterodimer of 2 subunits, IMMPL1 and IMMPL2.

Its subcellular location is the mitochondrion inner membrane. In terms of biological role, catalyzes the removal of transit peptides required for the targeting of proteins from the mitochondrial matrix, across the inner membrane, into the inter-membrane space. Known to process the nuclear encoded protein DIABLO. The polypeptide is Mitochondrial inner membrane protease subunit 1 (IMMP1L) (Homo sapiens (Human)).